We begin with the raw amino-acid sequence, 317 residues long: Protein-methionine-sulfoxide reductase catalytic subunit MsrP (317 aa).

The tat-type signal signal peptide spans Met1 to Ala40. Mo-molybdopterin is bound by residues Asn71, Tyr74–Glu75, Cys129, Thr164, Asn216, Arg221, and Ser232–Lys234.

The protein belongs to the MsrP family. In terms of assembly, heterodimer of a catalytic subunit (MsrP) and a heme-binding subunit (MsrQ). Mo-molybdopterin is required as a cofactor. In terms of processing, predicted to be exported by the Tat system. The position of the signal peptide cleavage has not been experimentally proven.

The protein resides in the periplasm. It catalyses the reaction L-methionyl-[protein] + a quinone + H2O = L-methionyl-(S)-S-oxide-[protein] + a quinol. The catalysed reaction is L-methionyl-[protein] + a quinone + H2O = L-methionyl-(R)-S-oxide-[protein] + a quinol. In terms of biological role, part of the MsrPQ system that repairs oxidized periplasmic proteins containing methionine sulfoxide residues (Met-O), using respiratory chain electrons. Thus protects these proteins from oxidative-stress damage caused by reactive species of oxygen and chlorine generated by the host defense mechanisms. MsrPQ is essential for the maintenance of envelope integrity under bleach stress, rescuing a wide series of structurally unrelated periplasmic proteins from methionine oxidation. The catalytic subunit MsrP is non-stereospecific, being able to reduce both (R-) and (S-) diastereoisomers of methionine sulfoxide. This chain is Protein-methionine-sulfoxide reductase catalytic subunit MsrP, found in Histophilus somni (strain 2336) (Haemophilus somnus).